Reading from the N-terminus, the 312-residue chain is Ribosomal protein L11 methyltransferase (312 aa).

S-adenosyl-L-methionine contacts are provided by threonine 162, glycine 183, aspartate 205, and asparagine 248.

The protein belongs to the methyltransferase superfamily. PrmA family.

Its subcellular location is the cytoplasm. It carries out the reaction L-lysyl-[protein] + 3 S-adenosyl-L-methionine = N(6),N(6),N(6)-trimethyl-L-lysyl-[protein] + 3 S-adenosyl-L-homocysteine + 3 H(+). Functionally, methylates ribosomal protein L11. This chain is Ribosomal protein L11 methyltransferase, found in Bacillus cereus (strain G9842).